We begin with the raw amino-acid sequence, 309 residues long: Anamorsin (309 aa).

The N-terminal SAM-like domain stretch occupies residues 6–172 (ISPGQLVAVF…KPNFEVGSSS (167 aa)). The linker stretch occupies residues 173–222 (QLKLLHKKSSSVKPVVDPATAKLWTLSANDMEDDSMDLIDSDELLDPEDL). Phosphoserine occurs at positions 182, 183, and 213. [2Fe-2S] cluster-binding residues include cysteine 235, cysteine 244, cysteine 247, and cysteine 249. The fe-S binding site A stretch occupies residues 235-249 (CGEGKKRKACKNCTC). Serine 269 carries the phosphoserine modification. Residues cysteine 271, cysteine 274, cysteine 282, and cysteine 285 each contribute to the [4Fe-4S] cluster site. 2 short sequence motifs (cx2C motif) span residues 271-274 (CGNC) and 282-285 (CANC). Residues 271 to 285 (CGNCYLGDAFRCANC) form a fe-S binding site B region. Phosphoserine occurs at positions 302 and 304.

The protein belongs to the anamorsin family. Monomer. Interacts with NDOR1. Interacts with CHCHD4. The cofactor is [2Fe-2S] cluster. It depends on [4Fe-4S] cluster as a cofactor.

The protein localises to the cytoplasm. Its subcellular location is the nucleus. The protein resides in the mitochondrion intermembrane space. Functionally, component of the cytosolic iron-sulfur (Fe-S) protein assembly (CIA) machinery required for the maturation of extramitochondrial Fe-S proteins. Part of an electron transfer chain functioning in an early step of cytosolic Fe-S biogenesis, facilitating the de novo assembly of a [4Fe-4S] cluster on the scaffold complex NUBP1-NUBP2. Electrons are transferred to CIAPIN1 from NADPH via the FAD- and FMN-containing protein NDOR1. NDOR1-CIAPIN1 are also required for the assembly of the diferric tyrosyl radical cofactor of ribonucleotide reductase (RNR), probably by providing electrons for reduction during radical cofactor maturation in the catalytic small subunit. Has anti-apoptotic effects in the cell. Involved in negative control of cell death upon cytokine withdrawal. Promotes development of hematopoietic cells. The protein is Anamorsin of Rattus norvegicus (Rat).